We begin with the raw amino-acid sequence, 91 residues long: Putative regulatory protein Helmi_20580 (91 aa).

Belongs to the RemA family.

The polypeptide is Putative regulatory protein Helmi_20580 (Heliobacterium modesticaldum (strain ATCC 51547 / Ice1)).